The primary structure comprises 303 residues: Protein transport protein SEC13-2 (303 aa).

WD repeat units follow at residues 7–46 (AHEG…NSSS), 53–95 (GHEG…GKMQ), 102–143 (VHSA…IAST), 149–202 (AHKF…ETYV), 209–251 (GHKD…KKND), and 261–300 (KFEQ…KWEE).

This sequence belongs to the WD repeat SEC13 family. In terms of assembly, the COPII coat is composed of at least 5 proteins: the SEC23/24 complex, the SEC13/31 complex, and the protein SAR1. Component of the nuclear pore complex (NPC). NPC constitutes the exclusive means of nucleocytoplasmic transport. NPCs allow the passive diffusion of ions and small molecules and the active, nuclear transport receptor-mediated bidirectional transport of macromolecules such as proteins, RNAs, ribonucleoparticles (RNPs), and ribosomal subunits across the nuclear envelope. Due to its 8-fold rotational symmetry, all subunits are present with 8 copies or multiples thereof.

Its subcellular location is the cytoplasmic vesicle. The protein localises to the COPII-coated vesicle membrane. It localises to the endoplasmic reticulum membrane. The protein resides in the nucleus. It is found in the nuclear pore complex. Component of the coat protein complex II (COPII) which promotes the formation of transport vesicles from the endoplasmic reticulum (ER). The coat has two main functions, the physical deformation of the endoplasmic reticulum membrane into vesicles and the selection of cargo molecules. It also functions as a component of the nuclear pore complex (NPC). NPC components, collectively referred to as nucleoporins (NUPs), can play the role of both NPC structural components and of docking or interaction partners for transiently associated nuclear transport factors. SEC13 is required for efficient mRNA export from the nucleus to the cytoplasm and for correct nuclear pore biogenesis and distribution. In Candida glabrata (strain ATCC 2001 / BCRC 20586 / JCM 3761 / NBRC 0622 / NRRL Y-65 / CBS 138) (Yeast), this protein is Protein transport protein SEC13-2 (SEC132).